A 146-amino-acid polypeptide reads, in one-letter code: Transcription antitermination protein NusB (146 aa).

This sequence belongs to the NusB family.

Functionally, involved in transcription antitermination. Required for transcription of ribosomal RNA (rRNA) genes. Binds specifically to the boxA antiterminator sequence of the ribosomal RNA (rrn) operons. The sequence is that of Transcription antitermination protein NusB from Koribacter versatilis (strain Ellin345).